Consider the following 200-residue polypeptide: Signal peptidase complex catalytic subunit SEC11 (200 aa).

Topologically, residues 1–15 (MFAELAPYLSNPRQT) are cytoplasmic. The helical; Signal-anchor for type II membrane protein transmembrane segment at 16–33 (LAQLLNFALVLSTAFMGW) threads the bilayer. Topologically, residues 34-200 (KALSVYTNSS…MGVMVMLQRE (167 aa)) are lumenal. N-linked (GlcNAc...) asparagine glycosylation is present at Asn41. Catalysis depends on charge relay system residues Ser53 and His92. The disordered stretch occupies residues 101–134 (GDGGKKSQRRLEREADKRSGPGLSSPVSHQMLTK). The segment covering 103 to 119 (GGKKSQRRLEREADKRS) has biased composition (basic and acidic residues). The active-site Charge relay system is Asp142. A C-terminal short (CTS) helix region spans residues 186–197 (VLLGIMGVMVML).

The protein belongs to the peptidase S26B family. Component of the signal peptidase complex (SPC) composed of a catalytic subunit SEC11 and three accessory subunits SPC1, SPC2 and SPC3. The complex induces a local thinning of the ER membrane which is used to measure the length of the signal peptide (SP) h-region of protein substrates. This ensures the selectivity of the complex towards h-regions shorter than 18-20 amino acids. SPC associates with the translocon complex.

The protein resides in the endoplasmic reticulum membrane. The catalysed reaction is Cleavage of hydrophobic, N-terminal signal or leader sequences from secreted and periplasmic proteins.. Functionally, catalytic component of the signal peptidase complex (SPC) which catalyzes the cleavage of N-terminal signal sequences from nascent proteins as they are translocated into the lumen of the endoplasmic reticulum. Specifically cleaves N-terminal signal peptides that contain a hydrophobic alpha-helix (h-region) shorter than 18-20 amino acids. The chain is Signal peptidase complex catalytic subunit SEC11 (SEC11) from Arthroderma benhamiae (strain ATCC MYA-4681 / CBS 112371) (Trichophyton mentagrophytes).